A 1702-amino-acid polypeptide reads, in one-letter code: Dicer-like protein 4 (1702 aa).

Disordered stretches follow at residues methionine 1–threonine 52 and serine 89–proline 120. A compositionally biased stretch (basic and acidic residues) spans glycine 17 to asparagine 31. The span at serine 89 to serine 105 shows a compositional bias: low complexity. In terms of domain architecture, Helicase ATP-binding spans leucine 131–serine 307. Residue leucine 144 to threonine 151 coordinates ATP. Positions aspartate 251 to histidine 254 match the DECH box motif. Residues glutamine 475–serine 629 form the Helicase C-terminal domain. Residues serine 656–aspartate 748 form the Dicer dsRNA-binding fold domain. Residues leucine 932–isoleucine 1054 enclose the PAZ domain. 2 RNase III domains span residues glutamate 1083 to glycine 1251 and leucine 1292 to glycine 1436. Glutamate 1330, aspartate 1422, and glutamate 1425 together coordinate Mg(2+). DRBM domains lie at serine 1462–alanine 1528 and threonine 1621–histidine 1697.

This sequence belongs to the helicase family. Dicer subfamily. As to quaternary structure, interacts with DRB4. Mg(2+) serves as cofactor. The cofactor is Mn(2+).

The protein resides in the nucleus. In terms of biological role, ribonuclease (RNase) III involved in RNA-mediated post-transcriptional gene silencing (PTGS). Functions in the biogenesis of trans-acting small interfering RNAs (ta-siRNAs, derived from the TAS1, TAS2 or TAS3 endogenous transcripts) by cleaving small dsRNAs into 21-24 nucleotide ta-siRNAs. Functions with the dsRNA-binding protein DRB4 in ta-siRNAs processing. Acts in the RDR6/SGS3/DCL4/AGO7 ta-siRNA pathway involved in leaf developmental timing. Plays a role in transitive silencing of transgenes by processing secondary siRNAs. This pathway, which requires DCL2 and RDR6, amplifies silencing by using the target RNA as substrate to generate secondary siRNAs, providing an efficient mechanism for long-distance silencing. Required for the production of the 30-40 nucleotide bacterial-induced long siRNAs (lsiRNA). May participate with DCL3 in the production of 24 nucleotide repeat-associated siRNAs (ra-siRNAs) which derive from heterochromatin and DNA repeats such as transposons. Plays an important role in antiviral RNA silencing. Involved in the production of viral siRNAs derived from the cucumber mosaic virus (CMV), turnip crinkle virus (TCV) and tobacco rattle virus (TRV). Targeted by the viral silencing suppressor (VSR) protein 2b of the cucumber mosaic virus (CMV) that inactivates DCL4 function in RNA silencing. Does not seem to be involved in microRNAs (miRNAs) processing. The sequence is that of Dicer-like protein 4 (DCL4) from Arabidopsis thaliana (Mouse-ear cress).